We begin with the raw amino-acid sequence, 194 residues long: Inosine triphosphate pyrophosphatase (194 aa).

Position 10–15 (10–15) interacts with ITP; the sequence is TSSKKK. Glutamate 37 is a Mg(2+) binding site. ITP-binding positions include lysine 49, 65 to 66, lysine 82, 142 to 145, lysine 166, and 171 to 172; these read DV, FGWD, and HR.

The protein belongs to the HAM1 NTPase family. Homodimer. Mg(2+) serves as cofactor. Requires Mn(2+) as cofactor.

The protein resides in the cytoplasm. It carries out the reaction ITP + H2O = IMP + diphosphate + H(+). It catalyses the reaction dITP + H2O = dIMP + diphosphate + H(+). The enzyme catalyses XTP + H2O = XMP + diphosphate + H(+). Functionally, pyrophosphatase that hydrolyzes non-canonical purine nucleotides such as inosine triphosphate (ITP), deoxyinosine triphosphate (dITP) or xanthosine 5'-triphosphate (XTP) to their respective monophosphate derivatives. The enzyme does not distinguish between the deoxy- and ribose forms. Probably excludes non-canonical purines from RNA and DNA precursor pools, thus preventing their incorporation into RNA and DNA and avoiding chromosomal lesions. In Giardia intestinalis (strain ATCC 50803 / WB clone C6) (Giardia lamblia), this protein is Inosine triphosphate pyrophosphatase.